Consider the following 181-residue polypeptide: Large ribosomal subunit protein uL5 (181 aa).

The protein belongs to the universal ribosomal protein uL5 family. Part of the 50S ribosomal subunit; part of the 5S rRNA/L5/L18/L25 subcomplex. Contacts the 5S rRNA and the P site tRNA. Forms a bridge to the 30S subunit in the 70S ribosome.

Its function is as follows. This is one of the proteins that bind and probably mediate the attachment of the 5S RNA into the large ribosomal subunit, where it forms part of the central protuberance. In the 70S ribosome it contacts protein S13 of the 30S subunit (bridge B1b), connecting the 2 subunits; this bridge is implicated in subunit movement. Contacts the P site tRNA; the 5S rRNA and some of its associated proteins might help stabilize positioning of ribosome-bound tRNAs. This Sulfurimonas denitrificans (strain ATCC 33889 / DSM 1251) (Thiomicrospira denitrificans (strain ATCC 33889 / DSM 1251)) protein is Large ribosomal subunit protein uL5.